Here is a 355-residue protein sequence, read N- to C-terminus: Syntaxin-5 (355 aa).

At 1 to 333 (MIPRKRYGSK…KYFQSVTSNR (333 aa)) the chain is on the cytoplasmic side. Residues 28–37 (PATAGSSSSD) show a composition bias toward polar residues. A disordered region spans residues 28–51 (PATAGSSSSDIAPLPPPVTLVPPP). Residues 40-51 (PLPPPVTLVPPP) show a composition bias toward pro residues. Residues 245–247 (IDM) carry the IxM motif; signal for cargo packaging into COPII-coated vesicles motif. Positions 263-325 (DSYIQSRADT…EAAHSEILKY (63 aa)) constitute a t-SNARE coiled-coil homology domain. The stretch at 287-318 (FQQLAHMVKEQEETIQRIDENVLGAQLDVEAA) forms a coiled coil. Residues 334–354 (WLMVKIFLILIVFFIIFVVFL) form a helical; Anchor for type IV membrane protein membrane-spanning segment. A topological domain (vesicular) is located at residue Ala-355.

It belongs to the syntaxin family. As to quaternary structure, part of a ternary complex containing STX5A, NSFL1C and VCP. Identified in a unique SNARE complex composed of the Golgi SNAREs GOSR1, GOSR2, YKT6 and VTI1A. Component of a SNARE complex consisting of STX5, YKT6, GOSR1 and BET1L. Interacts with BET1L. Interacts with BET1. Interacts with COG4. Interacts with GM130/GOLGA2. Interacts (via IxM motif) with SEC24C and SEC24D; mediates STX5 packaging into COPII-coated vesicles. Interacts with VLDLR; this interaction mediates VLDLR translocation from the endoplasmic reticulum to the plasma membrane.

The protein resides in the endoplasmic reticulum-Golgi intermediate compartment membrane. Its subcellular location is the golgi apparatus membrane. In terms of biological role, mediates endoplasmic reticulum to Golgi transport. Together with p115/USO1 and GM130/GOLGA2, involved in vesicle tethering and fusion at the cis-Golgi membrane to maintain the stacked and inter-connected structure of the Golgi apparatus. Its function is as follows. Required for Golgi to endoplasmic reticulum retrogade transport, and for intra-Golgi transport. (Microbial infection) Required for the efficient production of infectious virion during human cytomegalovirus infection. Mechanistically, participates in the formation of the cytoplasmic viral assembly compartment where tegument acquisition and envelopment occur. This is Syntaxin-5 (STX5) from Homo sapiens (Human).